The chain runs to 108 residues: Replication restart protein PriB (108 aa).

The SSB domain occupies 11 to 108; it reads INRNQVIISG…VLHVRDTRII (98 aa).

The protein belongs to the PriB family. As to quaternary structure, homodimer. Interacts with PriA and DnaT. Component of the replication restart primosome. Primosome assembly occurs via a 'hand-off' mechanism. PriA binds to replication forks, subsequently PriB then DnaT bind; DnaT then displaces ssDNA to generate the helicase loading substrate.

Its function is as follows. Involved in the restart of stalled replication forks, which reloads the replicative helicase on sites other than the origin of replication; the PriA-PriB pathway is the major replication restart pathway. During primosome assembly it facilitates complex formation between PriA and DnaT on DNA; stabilizes PriA on DNA. Stimulates the DNA unwinding activity of PriA helicase. This is Replication restart protein PriB from Nitrosomonas europaea (strain ATCC 19718 / CIP 103999 / KCTC 2705 / NBRC 14298).